The sequence spans 452 residues: Bifunctional protein GlmU (452 aa).

Residues 1–226 (MAFSVVVLAA…AVEVEGVNNR (226 aa)) form a pyrophosphorylase region. Residues 8 to 11 (LAAG), K22, Q73, and 78 to 79 (GT) contribute to the UDP-N-acetyl-alpha-D-glucosamine site. D102 contributes to the Mg(2+) binding site. UDP-N-acetyl-alpha-D-glucosamine is bound by residues G137, E151, N166, and N224. N224 contributes to the Mg(2+) binding site. Residues 227-247 (LQLANLERALQNRQADELMTN) form a linker region. The N-acetyltransferase stretch occupies residues 248 to 452 (GVTLLDPSRF…IPNWPRPTKK (205 aa)). Positions 330 and 348 each coordinate UDP-N-acetyl-alpha-D-glucosamine. Residue H360 is the Proton acceptor of the active site. Y363 and N374 together coordinate UDP-N-acetyl-alpha-D-glucosamine. Acetyl-CoA-binding positions include A377, 383–384 (NY), S402, A420, and R437.

This sequence in the N-terminal section; belongs to the N-acetylglucosamine-1-phosphate uridyltransferase family. It in the C-terminal section; belongs to the transferase hexapeptide repeat family. In terms of assembly, homotrimer. Requires Mg(2+) as cofactor.

The protein localises to the cytoplasm. It carries out the reaction alpha-D-glucosamine 1-phosphate + acetyl-CoA = N-acetyl-alpha-D-glucosamine 1-phosphate + CoA + H(+). It catalyses the reaction N-acetyl-alpha-D-glucosamine 1-phosphate + UTP + H(+) = UDP-N-acetyl-alpha-D-glucosamine + diphosphate. The protein operates within nucleotide-sugar biosynthesis; UDP-N-acetyl-alpha-D-glucosamine biosynthesis; N-acetyl-alpha-D-glucosamine 1-phosphate from alpha-D-glucosamine 6-phosphate (route II): step 2/2. It participates in nucleotide-sugar biosynthesis; UDP-N-acetyl-alpha-D-glucosamine biosynthesis; UDP-N-acetyl-alpha-D-glucosamine from N-acetyl-alpha-D-glucosamine 1-phosphate: step 1/1. Its pathway is bacterial outer membrane biogenesis; LPS lipid A biosynthesis. Its function is as follows. Catalyzes the last two sequential reactions in the de novo biosynthetic pathway for UDP-N-acetylglucosamine (UDP-GlcNAc). The C-terminal domain catalyzes the transfer of acetyl group from acetyl coenzyme A to glucosamine-1-phosphate (GlcN-1-P) to produce N-acetylglucosamine-1-phosphate (GlcNAc-1-P), which is converted into UDP-GlcNAc by the transfer of uridine 5-monophosphate (from uridine 5-triphosphate), a reaction catalyzed by the N-terminal domain. This chain is Bifunctional protein GlmU, found in Alteromonas mediterranea (strain DSM 17117 / CIP 110805 / LMG 28347 / Deep ecotype).